We begin with the raw amino-acid sequence, 457 residues long: Bifunctional F420 biosynthesis protein FbiB (457 aa).

The coenzyme F420:L-glutamate ligase stretch occupies residues 1–253; the sequence is MTSSDSHRSA…NGPDDLFWLG (253 aa). GTP contacts are provided by residues 29–32, Ser59, and Lys64; that span reads LPEF. An a divalent metal cation-binding site is contributed by Asp118. Asn121 lines the GTP pocket. Asp159 and Thr160 together coordinate a divalent metal cation. Positions 254–457 are dehydro-coenzyme F420-0 reductase; it reads TTEALELGRQ…VRVADLLLRK (204 aa). Residues 269–273 and Ala297 contribute to the FMN site; that span reads RRSVR. Residue Asp329 coordinates coenzyme F420-(gamma-Glu)n. Positions 408 and 445 each coordinate FMN.

This sequence in the N-terminal section; belongs to the CofE family. Mg(2+) is required as a cofactor. Mn(2+) serves as cofactor. The cofactor is K(+).

The catalysed reaction is oxidized coenzyme F420-0 + GTP + L-glutamate = oxidized coenzyme F420-1 + GDP + phosphate + H(+). The enzyme catalyses oxidized coenzyme F420-1 + GTP + L-glutamate = oxidized coenzyme F420-2 + GDP + phosphate + H(+). It catalyses the reaction oxidized coenzyme F420-(gamma-L-Glu)(n) + GTP + L-glutamate = oxidized coenzyme F420-(gamma-L-Glu)(n+1) + GDP + phosphate + H(+). It carries out the reaction oxidized coenzyme F420-0 + FMN + H(+) = dehydro coenzyme F420-0 + FMNH2. The protein operates within cofactor biosynthesis; coenzyme F420 biosynthesis. Its function is as follows. Bifunctional enzyme that catalyzes the GTP-dependent successive addition of multiple gamma-linked L-glutamates to the L-lactyl phosphodiester of 7,8-didemethyl-8-hydroxy-5-deazariboflavin (F420-0) to form polyglutamated F420 derivatives, and the FMNH2-dependent reduction of dehydro-F420-0 to form F420-0. This is Bifunctional F420 biosynthesis protein FbiB from Mycobacterium leprae (strain TN).